A 153-amino-acid polypeptide reads, in one-letter code: Arginine repressor (153 aa).

It belongs to the ArgR family.

The protein resides in the cytoplasm. It functions in the pathway amino-acid biosynthesis; L-arginine biosynthesis [regulation]. In terms of biological role, regulates arginine biosynthesis genes. The protein is Arginine repressor of Glaesserella parasuis serovar 5 (strain SH0165) (Haemophilus parasuis).